We begin with the raw amino-acid sequence, 257 residues long: Thiazole synthase (257 aa).

Lys96 serves as the catalytic Schiff-base intermediate with DXP. 1-deoxy-D-xylulose 5-phosphate is bound by residues Gly157, 184–185 (AG), and 206–207 (NT).

Belongs to the ThiG family. In terms of assembly, homotetramer. Forms heterodimers with either ThiH or ThiS.

It is found in the cytoplasm. It catalyses the reaction [ThiS sulfur-carrier protein]-C-terminal-Gly-aminoethanethioate + 2-iminoacetate + 1-deoxy-D-xylulose 5-phosphate = [ThiS sulfur-carrier protein]-C-terminal Gly-Gly + 2-[(2R,5Z)-2-carboxy-4-methylthiazol-5(2H)-ylidene]ethyl phosphate + 2 H2O + H(+). It functions in the pathway cofactor biosynthesis; thiamine diphosphate biosynthesis. Its function is as follows. Catalyzes the rearrangement of 1-deoxy-D-xylulose 5-phosphate (DXP) to produce the thiazole phosphate moiety of thiamine. Sulfur is provided by the thiocarboxylate moiety of the carrier protein ThiS. In vitro, sulfur can be provided by H(2)S. The polypeptide is Thiazole synthase (Bartonella bacilliformis (strain ATCC 35685 / KC583 / Herrer 020/F12,63)).